A 162-amino-acid chain; its full sequence is Crossover junction endodeoxyribonuclease RuvC (162 aa).

Active-site residues include D8, E69, and H141. 3 residues coordinate Mg(2+): D8, E69, and H141.

Belongs to the RuvC family. Homodimer which binds Holliday junction (HJ) DNA. The HJ becomes 2-fold symmetrical on binding to RuvC with unstacked arms; it has a different conformation from HJ DNA in complex with RuvA. In the full resolvosome a probable DNA-RuvA(4)-RuvB(12)-RuvC(2) complex forms which resolves the HJ. Requires Mg(2+) as cofactor.

It is found in the cytoplasm. The enzyme catalyses Endonucleolytic cleavage at a junction such as a reciprocal single-stranded crossover between two homologous DNA duplexes (Holliday junction).. Its function is as follows. The RuvA-RuvB-RuvC complex processes Holliday junction (HJ) DNA during genetic recombination and DNA repair. Endonuclease that resolves HJ intermediates. Cleaves cruciform DNA by making single-stranded nicks across the HJ at symmetrical positions within the homologous arms, yielding a 5'-phosphate and a 3'-hydroxyl group; requires a central core of homology in the junction. The consensus cleavage sequence is 5'-(A/T)TT(C/G)-3'. Cleavage occurs on the 3'-side of the TT dinucleotide at the point of strand exchange. HJ branch migration catalyzed by RuvA-RuvB allows RuvC to scan DNA until it finds its consensus sequence, where it cleaves and resolves the cruciform DNA. This chain is Crossover junction endodeoxyribonuclease RuvC, found in Wolbachia sp. subsp. Brugia malayi (strain TRS).